The sequence spans 148 residues: Large ribosomal subunit protein bL9 (148 aa).

This sequence belongs to the bacterial ribosomal protein bL9 family.

Binds to the 23S rRNA. The sequence is that of Large ribosomal subunit protein bL9 from Salinispora arenicola (strain CNS-205).